The following is a 1153-amino-acid chain: Cytosolic carboxypeptidase 1 (1153 aa).

Residues 357–400 (NQPPGVDDVVDESDENEATEVDTENDTENEEDDTGHKTQNDDIE) form a disordered region. Residues 364–389 (DVVDESDENEATEVDTENDTENEEDD) show a composition bias toward acidic residues. The 290-residue stretch at 774 to 1063 (YPYTYSMLKM…QFCLALLRLR (290 aa)) folds into the Peptidase M14 domain. H845, E848, and H942 together coordinate Zn(2+). E1027 (proton donor/acceptor) is an active-site residue. Residues 1108 to 1128 (AFLEEVDYSAESNDENDPELE) show a composition bias toward acidic residues. A disordered region spans residues 1108 to 1153 (AFLEEVDYSAESNDENDPELEPDLRDNHALPDPSSDSELSHQDSLT). Over residues 1141-1153 (SSDSELSHQDSLT) the composition is skewed to polar residues.

The protein belongs to the peptidase M14 family. Requires Zn(2+) as cofactor.

The protein localises to the cytoplasm. Its subcellular location is the cytosol. It is found in the nucleus. It localises to the mitochondrion. The catalysed reaction is (L-glutamyl)(n+1)-gamma-L-glutamyl-L-glutamyl-[protein] + H2O = (L-glutamyl)(n)-gamma-L-glutamyl-L-glutamyl-[protein] + L-glutamate. It catalyses the reaction C-terminal L-alpha-aminoacyl-L-glutamyl-L-glutamyl-[tubulin] + H2O = C-terminal L-alpha-aminoacyl-L-glutamyl-[tubulin] + L-glutamate. Its function is as follows. Metallocarboxypeptidase that mediates protein deglutamylation of tubulin and non-tubulin target proteins. Catalyzes the removal of polyglutamate side chains present on the gamma-carboxyl group of glutamate residues within the C-terminal tail of alpha- and beta-tubulin. Specifically cleaves tubulin long-side-chains, while it is not able to remove the branching point glutamate. Also catalyzes the removal of polyglutamate residues from the carboxy-terminus of alpha-tubulin as well as non-tubulin proteins. This is Cytosolic carboxypeptidase 1 (agtpbp1) from Danio rerio (Zebrafish).